Consider the following 239-residue polypeptide: Succinate dehydrogenase [ubiquinone] iron-sulfur subunit (239 aa).

Positions 11 to 100 (FKVYRWNPDK…EMKIYPLPHM (90 aa)) constitute a 2Fe-2S ferredoxin-type domain. Residues C61, C66, C69, and C81 each contribute to the [2Fe-2S] cluster site. Residues 141–171 (DREKLDGLYECVLCACCSTSCPSYWWNSDKY) form the 4Fe-4S ferredoxin-type domain. 3 residues coordinate [4Fe-4S] cluster: C151, C154, and C157. Residue C161 coordinates [3Fe-4S] cluster. An a ubiquinone-binding site is contributed by W166. Residues C208 and C214 each coordinate [3Fe-4S] cluster. Position 218 (C218) interacts with [4Fe-4S] cluster.

The protein belongs to the succinate dehydrogenase/fumarate reductase iron-sulfur protein family. As to quaternary structure, component of complex II composed of four subunits: a flavoprotein (FP), an iron-sulfur protein (IP), and a cytochrome b composed of a large and a small subunit. It depends on [2Fe-2S] cluster as a cofactor. The cofactor is [3Fe-4S] cluster. [4Fe-4S] cluster serves as cofactor.

The protein localises to the mitochondrion inner membrane. The enzyme catalyses a quinone + succinate = fumarate + a quinol. It participates in carbohydrate metabolism; tricarboxylic acid cycle; fumarate from succinate (eukaryal route): step 1/1. Iron-sulfur protein (IP) subunit of succinate dehydrogenase (SDH) that is involved in complex II of the mitochondrial electron transport chain and is responsible for transferring electrons from succinate to ubiquinone (coenzyme Q). The chain is Succinate dehydrogenase [ubiquinone] iron-sulfur subunit (SDH2) from Reclinomonas americana.